A 166-amino-acid polypeptide reads, in one-letter code: Large ribosomal subunit protein uL10 (166 aa).

Belongs to the universal ribosomal protein uL10 family. As to quaternary structure, part of the ribosomal stalk of the 50S ribosomal subunit. The N-terminus interacts with L11 and the large rRNA to form the base of the stalk. The C-terminus forms an elongated spine to which L12 dimers bind in a sequential fashion forming a multimeric L10(L12)X complex.

In terms of biological role, forms part of the ribosomal stalk, playing a central role in the interaction of the ribosome with GTP-bound translation factors. This chain is Large ribosomal subunit protein uL10, found in Streptococcus pyogenes serotype M28 (strain MGAS6180).